Reading from the N-terminus, the 366-residue chain is Ribosomal RNA large subunit methyltransferase M (366 aa).

Residues Ser188, 221-224 (CPGG), Asp240, Asp260, and Asp277 contribute to the S-adenosyl-L-methionine site. The active-site Proton acceptor is the Lys306.

The protein belongs to the class I-like SAM-binding methyltransferase superfamily. RNA methyltransferase RlmE family. RlmM subfamily. As to quaternary structure, monomer.

The protein localises to the cytoplasm. The catalysed reaction is cytidine(2498) in 23S rRNA + S-adenosyl-L-methionine = 2'-O-methylcytidine(2498) in 23S rRNA + S-adenosyl-L-homocysteine + H(+). Catalyzes the 2'-O-methylation at nucleotide C2498 in 23S rRNA. The sequence is that of Ribosomal RNA large subunit methyltransferase M from Citrobacter koseri (strain ATCC BAA-895 / CDC 4225-83 / SGSC4696).